The sequence spans 375 residues: Lipid-A-disaccharide synthase (375 aa).

The protein belongs to the LpxB family.

The catalysed reaction is a lipid X + a UDP-2-N,3-O-bis[(3R)-3-hydroxyacyl]-alpha-D-glucosamine = a lipid A disaccharide + UDP + H(+). It functions in the pathway bacterial outer membrane biogenesis; LPS lipid A biosynthesis. Condensation of UDP-2,3-diacylglucosamine and 2,3-diacylglucosamine-1-phosphate to form lipid A disaccharide, a precursor of lipid A, a phosphorylated glycolipid that anchors the lipopolysaccharide to the outer membrane of the cell. This Pseudomonas putida (strain ATCC 700007 / DSM 6899 / JCM 31910 / BCRC 17059 / LMG 24140 / F1) protein is Lipid-A-disaccharide synthase.